Here is a 572-residue protein sequence, read N- to C-terminus: Urease subunit alpha (572 aa).

Residues His-139, His-141, and Lys-222 each contribute to the Ni(2+) site. Position 222 is an N6-carboxylysine (Lys-222). His-224 contributes to the substrate binding site. The Ni(2+) site is built by His-251 and His-277. His-325 serves as the catalytic Proton donor. Ni(2+) is bound at residue Asp-365.

Belongs to the metallo-dependent hydrolases superfamily. Urease alpha subunit family. In terms of assembly, heterotrimer of UreA (gamma), UreB (beta) and UreC (alpha) subunits. Three heterotrimers associate to form the active enzyme. Ni cation is required as a cofactor. In terms of processing, carboxylation allows a single lysine to coordinate two nickel ions.

It is found in the cytoplasm. The enzyme catalyses urea + 2 H2O + H(+) = hydrogencarbonate + 2 NH4(+). Its pathway is nitrogen metabolism; urea degradation; CO(2) and NH(3) from urea (urease route): step 1/1. In Acetivibrio thermocellus (strain ATCC 27405 / DSM 1237 / JCM 9322 / NBRC 103400 / NCIMB 10682 / NRRL B-4536 / VPI 7372) (Clostridium thermocellum), this protein is Urease subunit alpha.